Reading from the N-terminus, the 357-residue chain is Zinc finger protein 830 (357 aa).

Residues 47–69 form a C2H2-type zinc finger; that stretch reads CVVCNIQIKSELLWPAHILGKQH. Disordered stretches follow at residues 98–126, 157–194, and 231–255; these read RKGSEPENQESKRIKGTEDQPTALKTKLP, DDDEVEGEEYENVNEASTSLQKPAEIPLPPPTSSADRL, and ALPEGFFDDPEADAKVRKVDAPKDQ. The segment covering 99 to 115 has biased composition (basic and acidic residues); that stretch reads KGSEPENQESKRIKGTE. Residues 157–168 show a composition bias toward acidic residues; the sequence is DDDEVEGEEYEN. Basic and acidic residues predominate over residues 242–255; it reads ADAKVRKVDAPKDQ. The stretch at 279 to 325 forms a coiled coil; sequence AEEDEEGRLDRQIDEIDEQIECYRRVEHLRDLKDTLQDAKMEVLKSK.

The protein resides in the nucleus. Its subcellular location is the chromosome. It localises to the nucleus speckle. Functionally, may act as an important regulator of the cell cycle that participates in the maintenance of genome integrity. In Xenopus tropicalis (Western clawed frog), this protein is Zinc finger protein 830.